Here is a 160-residue protein sequence, read N- to C-terminus: NADH-quinone oxidoreductase subunit B (160 aa).

[4Fe-4S] cluster-binding residues include Cys-37, Cys-38, Cys-102, and Cys-132.

The protein belongs to the complex I 20 kDa subunit family. As to quaternary structure, NDH-1 is composed of 14 different subunits. Subunits NuoB, C, D, E, F, and G constitute the peripheral sector of the complex. The cofactor is [4Fe-4S] cluster.

The protein localises to the cell inner membrane. It carries out the reaction a quinone + NADH + 5 H(+)(in) = a quinol + NAD(+) + 4 H(+)(out). Functionally, NDH-1 shuttles electrons from NADH, via FMN and iron-sulfur (Fe-S) centers, to quinones in the respiratory chain. Couples the redox reaction to proton translocation (for every two electrons transferred, four hydrogen ions are translocated across the cytoplasmic membrane), and thus conserves the redox energy in a proton gradient. This Neisseria gonorrhoeae (strain NCCP11945) protein is NADH-quinone oxidoreductase subunit B.